A 997-amino-acid polypeptide reads, in one-letter code: MSEEKIKVSELAKEFPAVPNKDMLRALRELGASAKSMAGSLTTEEAARVREHFAEQKQADAERSGSHPNVIVRRRRKDADKADAPEVTEAAPAAREEVAPPAEEKPAAVEAPAQAEPVAEAPAASPHKVEEKAAPEAAKAEPAEKAKSSKARVVSAARVISRPGEEEEKKPEPVVESKPEPVAEISPVAAALAAREAAARAEEKSSEKGEEKGAKAARLARPDASAMPEGSSAPTLPQRAPEARTEAWKDADASAAADAAPRRAPRADGGQAPSAAPQVRIISRPAPGSQPDRSTRPAGGRPGAPGGPRGDSAGRPPRPGGPRPSGPGGPRPAGGPRPGGFGQQPAAPASPTDTRDGQSKKKRLKGRRTVDFQQGDFGGRRDDDDSQRLNRGKGRRKGGKPTSSQATQPLKAAKRKIRVTEAIRVADMAHQMGLKANEIIKVLFGLGVMATINQALDFDTATLVASEFGYEVEKAGFSEDDYLTPKEVDAPETLKPRPPVVTIMGHVDHGKTSLLDAIRKSNVTSGEAGGITQHIGAYHVKTKRGEIVFLDTPGHEAFTAMRARGAQVTDLVILVVAADDGVMEQTREAINHARAAGVPIMVAVNKMDKPSADPDRVLRELAELGLQAEEWGGDTIVAKVAAKTRMGLDDLLEMVALQSEIMELKANPDKAAKGHIVEAKLDKGRGPVATVLIQEGTLRQGDSFVCGPFSGRVRALMNDQGKKVKEAGPSLPVEVQGFEGVPEAGEEFFVVSDEKLARRIADSRAIKQRERELASESRVTLETFLSQRKSDQETLTLNLVLKSDVQGSLEAITEALLKQSTDKVRINVVHGGTGAITESDILLASASQAIIIGFNVRPTAKIKDVAEHENVDIRFYEIIYKLVDDIKSAMAGLLAPVQREVYLGQAEVRDTFSVPKIGLIAGSYVADGKIARNAGVRLLRDGVVVYTGKISSLKRFKDDAREVVKGNECGVGLENFNDVKIGDIIEAFETVEEAATL.

A disordered region spans residues 36-415 (SMAGSLTTEE…ATQPLKAAKR (380 aa)). Basic and acidic residues-rich tracts occupy residues 45–65 (EAAR…ERSG) and 94–107 (AREE…EKPA). Low complexity predominate over residues 108–126 (AVEAPAQAEPVAEAPAASP). The segment covering 127-147 (HKVEEKAAPEAAKAEPAEKAK) has biased composition (basic and acidic residues). Residues 151-162 (ARVVSAARVISR) are compositionally biased toward low complexity. Residues 163–181 (PGEEEEKKPEPVVESKPEP) are compositionally biased toward basic and acidic residues. Residues 182 to 196 (VAEISPVAAALAARE) are compositionally biased toward low complexity. Basic and acidic residues-rich tracts occupy residues 197-214 (AAAR…EKGA) and 241-252 (PEARTEAWKDAD). Positions 300–309 (GRPGAPGGPR) are enriched in gly residues. Pro residues predominate over residues 316–335 (PPRPGGPRPSGPGGPRPAGG). A compositionally biased stretch (basic and acidic residues) spans 378–388 (GGRRDDDDSQR). Basic residues predominate over residues 390–399 (NRGKGRRKGG). In terms of domain architecture, tr-type G spans 496–665 (PRPPVVTIMG…ALQSEIMELK (170 aa)). The G1 stretch occupies residues 505-512 (GHVDHGKT). 505–512 (GHVDHGKT) provides a ligand contact to GTP. Residues 530–534 (GITQH) form a G2 region. The tract at residues 551–554 (DTPG) is G3. GTP contacts are provided by residues 551 to 555 (DTPGH) and 605 to 608 (NKMD). Positions 605-608 (NKMD) are G4. The interval 641–643 (AAK) is G5.

Belongs to the TRAFAC class translation factor GTPase superfamily. Classic translation factor GTPase family. IF-2 subfamily.

It localises to the cytoplasm. One of the essential components for the initiation of protein synthesis. Protects formylmethionyl-tRNA from spontaneous hydrolysis and promotes its binding to the 30S ribosomal subunits. Also involved in the hydrolysis of GTP during the formation of the 70S ribosomal complex. This chain is Translation initiation factor IF-2, found in Desulfovibrio desulfuricans (strain ATCC 27774 / DSM 6949 / MB).